A 30-amino-acid polypeptide reads, in one-letter code: Agglutinin alpha-1 chain (30 aa).

In terms of domain architecture, Jacalin-type lectin spans 1–30 (GVAFDDGSYTGIREINFEYNRETAIGGXQV).

This sequence belongs to the jacalin lectin family. As to quaternary structure, tetramer of four alpha chains associated with two or four beta chains.

In terms of biological role, N-acetyl-galactosamine and D-galactose specific lectin. Binds the Tn-antigen structure GalNAc-alpha-1-O-Ser, the T-antigen structure Gal-beta1-3-GalNAc and IgA. This chain is Agglutinin alpha-1 chain, found in Morus nigra (Black mulberry).